Consider the following 726-residue polypeptide: Type VI secretion system spike protein VgrG1c (726 aa).

The tract at residues 502 to 522 (ANATQSGTKSRSSKGGTPANF) is disordered. Over residues 507–518 (SGTKSRSSKGGT) the composition is skewed to low complexity.

The protein belongs to the VgrG protein family. As to quaternary structure, forms homomultimers. Part of the type VI secretion system (T6SS).

The protein resides in the secreted. Part of the H1 type VI secretion system (H1-T6SS) specialized secretion system, which delivers several virulence factors in both prokaryotic and eukaryotic cells during infection. Allows the delivery of the Tse5/RhsP1 toxin to target cells where it exerts its toxicity. The sequence is that of Type VI secretion system spike protein VgrG1c from Pseudomonas aeruginosa (strain ATCC 15692 / DSM 22644 / CIP 104116 / JCM 14847 / LMG 12228 / 1C / PRS 101 / PAO1).